We begin with the raw amino-acid sequence, 616 residues long: Chaperone protein HscA (616 aa).

It belongs to the heat shock protein 70 family.

Its function is as follows. Chaperone involved in the maturation of iron-sulfur cluster-containing proteins. Has a low intrinsic ATPase activity which is markedly stimulated by HscB. Involved in the maturation of IscU. This Cronobacter sakazakii (strain ATCC BAA-894) (Enterobacter sakazakii) protein is Chaperone protein HscA.